The following is a 351-amino-acid chain: Dihydroorotate dehydrogenase (quinone) (351 aa).

FMN contacts are provided by residues 61 to 65 and Thr-85; that span reads AGLDK. Substrate is bound at residue Lys-65. 110-114 contacts substrate; that stretch reads NRMGF. Residues Asn-139 and Asn-172 each contribute to the FMN site. Asn-172 contacts substrate. Catalysis depends on Ser-175, which acts as the Nucleophile. Asn-177 serves as a coordination point for substrate. The FMN site is built by Lys-217 and Thr-245. 246–247 provides a ligand contact to substrate; the sequence is NT. FMN is bound by residues Gly-268, Gly-297, and 318–319; that span reads YS.

The protein belongs to the dihydroorotate dehydrogenase family. Type 2 subfamily. As to quaternary structure, monomer. FMN serves as cofactor.

Its subcellular location is the cell membrane. It carries out the reaction (S)-dihydroorotate + a quinone = orotate + a quinol. It functions in the pathway pyrimidine metabolism; UMP biosynthesis via de novo pathway; orotate from (S)-dihydroorotate (quinone route): step 1/1. Its function is as follows. Catalyzes the conversion of dihydroorotate to orotate with quinone as electron acceptor. The polypeptide is Dihydroorotate dehydrogenase (quinone) (Xanthomonas oryzae pv. oryzae (strain PXO99A)).